The chain runs to 34 residues: uncharacterized protein (34 aa).

This is an uncharacterized protein from Acidianus two-tailed virus (ATV).